The primary structure comprises 463 residues: Serine/threonine-protein kinase tricornered (463 aa).

A Protein kinase domain is found at 93–394 (FEALKVIGRG…LEDLKSVPFF (302 aa)). ATP contacts are provided by residues 99 to 107 (IGRGAFGEV) and lysine 122. Positions 119–180 (YAMKVLRKAD…EFLPGGDMMT (62 aa)) are interaction with mats and Mob1. Aspartate 216 serves as the catalytic Proton acceptor. Position 292 is a phosphoserine (serine 292). Residues 395 to 463 (RGVDWEHIRE…YKRFEVRNLE (69 aa)) form the AGC-kinase C-terminal domain. At threonine 453 the chain carries Phosphothreonine.

The protein belongs to the protein kinase superfamily. AGC Ser/Thr protein kinase family. In terms of assembly, interacts with, and is activated by, Mob1. Requires Mg(2+) as cofactor. Expressed in the peripheral and central nervous system (at protein level). Expressed in the wing imaginal disk.

It is found in the cytoplasm. It localises to the nucleus. The catalysed reaction is L-seryl-[protein] + ATP = O-phospho-L-seryl-[protein] + ADP + H(+). The enzyme catalyses L-threonyl-[protein] + ATP = O-phospho-L-threonyl-[protein] + ADP + H(+). Activated by fry. Serine/threonine-protein kinase involved in controlling cell structure and proliferation of a variety of polarized outgrowths including epidermal hairs, bristles, arista laterals, and dendrites. Together with fry, maintains the integrity of epidermal hairs and is an essential component of the signaling pathway regulating dendritic branching of sensory neurons. Reduces neurite outgrowth by phosphorylating pav, thereby inhibiting its function in microtubule-microtubule sliding. The sequence is that of Serine/threonine-protein kinase tricornered from Drosophila melanogaster (Fruit fly).